We begin with the raw amino-acid sequence, 2455 residues long: Ectopic P granules protein 5 homolog (2455 aa).

The interval 1–42 (MATLEKPKKEKSKKSRNRVPIEKEEEEPAELSTSEEQRPAEN) is disordered. Position 44 is a phosphoserine (Ser-44). A disordered region spans residues 77-105 (VTSQEPEGTQEPTETEAQPSAPSAPPSTT). Positions 80-97 (QEPEGTQEPTETEAQPSA) are enriched in low complexity. Phosphoserine is present on Ser-467.

This sequence belongs to the EPG5 family.

Its subcellular location is the cytoplasm. The protein resides in the perinuclear region. It is found in the lysosome. In terms of biological role, involved in autophagy. Plays a role in late steps of autophagy. The polypeptide is Ectopic P granules protein 5 homolog (Drosophila melanogaster (Fruit fly)).